We begin with the raw amino-acid sequence, 275 residues long: Phosphonoacetaldehyde hydrolase (275 aa).

Catalysis depends on Asp15, which acts as the Nucleophile. Positions 15 and 17 each coordinate Mg(2+). Lys56 acts as the Schiff-base intermediate with substrate in catalysis. Asp189 is a Mg(2+) binding site.

This sequence belongs to the HAD-like hydrolase superfamily. PhnX family. As to quaternary structure, homodimer. The cofactor is Mg(2+).

It carries out the reaction phosphonoacetaldehyde + H2O = acetaldehyde + phosphate + H(+). Functionally, involved in phosphonate degradation. The chain is Phosphonoacetaldehyde hydrolase from Pseudomonas fluorescens (strain Pf0-1).